Here is a 176-residue protein sequence, read N- to C-terminus: Dual-action ribosomal maturation protein DarP (176 aa).

The protein belongs to the DarP family.

It is found in the cytoplasm. In terms of biological role, member of a network of 50S ribosomal subunit biogenesis factors which assembles along the 30S-50S interface, preventing incorrect 23S rRNA structures from forming. Promotes peptidyl transferase center (PTC) maturation. This chain is Dual-action ribosomal maturation protein DarP, found in Haemophilus ducreyi (strain 35000HP / ATCC 700724).